Here is a 307-residue protein sequence, read N- to C-terminus: uncharacterized protein (307 aa).

An EAL domain is found at 54–307 (RHYLSTSMRV…KALPVDFFRE (254 aa)). A run of 2 helical transmembrane segments spans residues 158–178 (PGFL…AHAL) and 203–223 (ALGV…LAYL).

It localises to the cell membrane. This is an uncharacterized protein from Mycobacterium tuberculosis (strain CDC 1551 / Oshkosh).